The chain runs to 382 residues: Alkanesulfonate monooxygenase (382 aa).

The protein belongs to the SsuD family.

It catalyses the reaction an alkanesulfonate + FMNH2 + O2 = an aldehyde + FMN + sulfite + H2O + 2 H(+). Its function is as follows. Catalyzes the desulfonation of aliphatic sulfonates. In Ectopseudomonas mendocina (strain ymp) (Pseudomonas mendocina), this protein is Alkanesulfonate monooxygenase.